Consider the following 639-residue polypeptide: Polypeptide N-acetylgalactosaminyltransferase 15 (639 aa).

The Cytoplasmic segment spans residues Met-1–Pro-11. The chain crosses the membrane as a helical; Signal-anchor for type II membrane protein span at residues Cys-12–His-34. Residues Pro-35 to Arg-639 lie on the Lumenal side of the membrane. A disordered region spans residues Arg-106–Asp-155. N-linked (GlcNAc...) asparagine glycosylation occurs at Asn-107. The segment covering Arg-124–Gly-136 has biased composition (basic and acidic residues). Residues Ala-137 to Leu-149 are compositionally biased toward acidic residues. Disulfide bonds link Cys-181/Cys-412, Cys-403/Cys-482, Cys-517/Cys-536, Cys-562/Cys-575, and Cys-603/Cys-620. The interval Leu-190–Arg-299 is catalytic subdomain A. Residues Asp-231 and Arg-260 each contribute to the substrate site. Residues Asp-283, His-285, and His-417 each coordinate Mn(2+). The catalytic subdomain B stretch occupies residues Pro-358 to Gln-420. Residues Ser-504–Asp-631 enclose the Ricin B-type lectin domain. Asn-574 carries an N-linked (GlcNAc...) asparagine glycan.

Belongs to the glycosyltransferase 2 family. GalNAc-T subfamily. Mn(2+) is required as a cofactor. Widely expressed. Highly expressed in small intestine, placenta, spleen, cerebral cortex and ovary. Expressed at intermediate level in uterus, mammary gland, stomach, cerebellum and whole brain. Weakly expressed in fetal brain, bone marrow, thyroid gland, thymus, heart, skeletal muscle, lung, liver, colon, pancreas, kidney and testis. Not expressed in leukocyte. Expressed in both normal and osteoarthritic cartilage. Expressed at low level in chondrocytes in all zones of both normal and osteoarthritic cartilage.

The protein localises to the golgi apparatus membrane. It carries out the reaction L-seryl-[protein] + UDP-N-acetyl-alpha-D-galactosamine = a 3-O-[N-acetyl-alpha-D-galactosaminyl]-L-seryl-[protein] + UDP + H(+). The catalysed reaction is L-threonyl-[protein] + UDP-N-acetyl-alpha-D-galactosamine = a 3-O-[N-acetyl-alpha-D-galactosaminyl]-L-threonyl-[protein] + UDP + H(+). The protein operates within protein modification; protein glycosylation. Functionally, catalyzes the initial reaction in O-linked oligosaccharide biosynthesis, the transfer of an N-acetyl-D-galactosamine residue to a serine or threonine residue on the protein receptor. Although it displays a much weaker activity toward all substrates tested compared to GALNT2, it is able to transfer up to seven GalNAc residues to the Muc5AC peptide, suggesting that it can fill vicinal Thr/Ser residues in cooperation with other GALNT proteins. Prefers Muc1a as substrate. The chain is Polypeptide N-acetylgalactosaminyltransferase 15 (GALNT15) from Homo sapiens (Human).